The chain runs to 1197 residues: DNA-directed RNA polymerase subunit beta (1197 aa).

Residues 1172–1185 (KEQEEKKAQQEAEK) are compositionally biased toward basic and acidic residues. Positions 1172–1197 (KEQEEKKAQQEAEKAQAASAEDPSAE) are disordered. A compositionally biased stretch (low complexity) spans 1186–1197 (AQAASAEDPSAE).

The protein belongs to the RNA polymerase beta chain family. In terms of assembly, the RNAP catalytic core consists of 2 alpha, 1 beta, 1 beta' and 1 omega subunit. When a sigma factor is associated with the core the holoenzyme is formed, which can initiate transcription.

The catalysed reaction is RNA(n) + a ribonucleoside 5'-triphosphate = RNA(n+1) + diphosphate. DNA-dependent RNA polymerase catalyzes the transcription of DNA into RNA using the four ribonucleoside triphosphates as substrates. The protein is DNA-directed RNA polymerase subunit beta of Latilactobacillus sakei subsp. sakei (strain 23K) (Lactobacillus sakei subsp. sakei).